The chain runs to 224 residues: Ras-related protein RABA4b (224 aa).

An N-acetylalanine modification is found at Ala-2. Gly-24 to Ser-31 provides a ligand contact to GTP. The Effector region signature appears at Ser-46–Phe-54. Residues Asp-72–Gln-76, Asn-130–Asp-133, and Ser-160–Ala-161 contribute to the GTP site. Residues Cys-220 and Cys-221 are each lipidated (S-geranylgeranyl cysteine).

Belongs to the small GTPase superfamily. Rab family. Interacts with TCTP1. Expressed in roots, stems, leaves and flowers. Expressed in tips of growing root hair cells.

It localises to the early endosome membrane. The protein resides in the golgi apparatus. The protein localises to the trans-Golgi network membrane. In terms of biological role, regulator of membrane trafficking. May be required for secretion of cell wall components in cells. The polypeptide is Ras-related protein RABA4b (Arabidopsis thaliana (Mouse-ear cress)).